The sequence spans 302 residues: tRNA pseudouridine synthase B (302 aa).

D40 functions as the Nucleophile in the catalytic mechanism.

Belongs to the pseudouridine synthase TruB family. Type 1 subfamily.

It carries out the reaction uridine(55) in tRNA = pseudouridine(55) in tRNA. Functionally, responsible for synthesis of pseudouridine from uracil-55 in the psi GC loop of transfer RNAs. The polypeptide is tRNA pseudouridine synthase B (Shouchella clausii (strain KSM-K16) (Alkalihalobacillus clausii)).